Reading from the N-terminus, the 125-residue chain is Profilin-A (125 aa).

Ser2 is modified (N-acetylserine).

Belongs to the profilin family. As to quaternary structure, occurs in many kinds of cells as a complex with monomeric actin in a 1:1 ratio.

Its subcellular location is the cytoplasm. It localises to the cytoskeleton. In terms of biological role, binds to actin and affects the structure of the cytoskeleton. At high concentrations, profilin prevents the polymerization of actin, whereas it enhances it at low concentrations. By binding to PIP2, it inhibits the formation of IP3 and DG. The chain is Profilin-A (PROA) from Physarum polycephalum (Slime mold).